We begin with the raw amino-acid sequence, 72 residues long: UPF0150 protein ssl0738 (72 aa).

The protein belongs to the UPF0150 family.

The chain is UPF0150 protein ssl0738 from Synechocystis sp. (strain ATCC 27184 / PCC 6803 / Kazusa).